The chain runs to 63 residues: Large ribosomal subunit protein bL28 (63 aa).

The protein belongs to the bacterial ribosomal protein bL28 family.

The protein is Large ribosomal subunit protein bL28 of Thermomicrobium roseum (strain ATCC 27502 / DSM 5159 / P-2).